We begin with the raw amino-acid sequence, 275 residues long: Large ribosomal subunit protein uL2 (275 aa).

Residues 221–275 (RGSAMTPRDHPHGGGEGKAPRGMPPKTPWGKPALGKRTRRNKKSDRFIIRRRYEA) form a disordered region. Basic and acidic residues predominate over residues 227-239 (PRDHPHGGGEGKA). Positions 254–263 (LGKRTRRNKK) are enriched in basic residues. Residues 264 to 275 (SDRFIIRRRYEA) are compositionally biased toward basic and acidic residues.

This sequence belongs to the universal ribosomal protein uL2 family. In terms of assembly, part of the 50S ribosomal subunit. Forms a bridge to the 30S subunit in the 70S ribosome.

In terms of biological role, one of the primary rRNA binding proteins. Required for association of the 30S and 50S subunits to form the 70S ribosome, for tRNA binding and peptide bond formation. It has been suggested to have peptidyltransferase activity; this is somewhat controversial. Makes several contacts with the 16S rRNA in the 70S ribosome. The protein is Large ribosomal subunit protein uL2 of Thermomicrobium roseum (strain ATCC 27502 / DSM 5159 / P-2).